Here is a 1360-residue protein sequence, read N- to C-terminus: DNA-directed RNA polymerase subunit beta (1360 aa).

The protein belongs to the RNA polymerase beta chain family. The RNAP catalytic core consists of 2 alpha, 1 beta, 1 beta' and 1 omega subunit. When a sigma factor is associated with the core the holoenzyme is formed, which can initiate transcription.

It catalyses the reaction RNA(n) + a ribonucleoside 5'-triphosphate = RNA(n+1) + diphosphate. DNA-dependent RNA polymerase catalyzes the transcription of DNA into RNA using the four ribonucleoside triphosphates as substrates. The sequence is that of DNA-directed RNA polymerase subunit beta from Vesicomyosocius okutanii subsp. Calyptogena okutanii (strain HA).